We begin with the raw amino-acid sequence, 530 residues long: T-complex protein 1 subunit zeta-2 (530 aa).

The protein belongs to the TCP-1 chaperonin family. Component of the chaperonin-containing T-complex (TRiC), a heterooligomeric complex of about 850 to 900 kDa that forms two stacked rings, 12 to 16 nm in diameter. In terms of tissue distribution, testis-specific.

The protein resides in the cytoplasm. Component of the chaperonin-containing T-complex (TRiC), a molecular chaperone complex that assists the folding of proteins upon ATP hydrolysis. This chain is T-complex protein 1 subunit zeta-2 (CCT6B), found in Homo sapiens (Human).